Here is a 405-residue protein sequence, read N- to C-terminus: Cellobiose 2-epimerase (405 aa).

Belongs to the cellobiose 2-epimerase family.

It carries out the reaction D-cellobiose = beta-D-glucosyl-(1-&gt;4)-D-mannopyranose. Its function is as follows. Catalyzes the reversible epimerization of cellobiose to 4-O-beta-D-glucopyranosyl-D-mannose (Glc-Man). Can also epimerize lactose to epilactose. This chain is Cellobiose 2-epimerase (ce13), found in Eubacterium cellulosolvens.